Reading from the N-terminus, the 125-residue chain is Holo-[acyl-carrier-protein] synthase (125 aa).

Residues D8 and E57 each contribute to the Mg(2+) site.

It belongs to the P-Pant transferase superfamily. AcpS family. Mg(2+) serves as cofactor.

The protein resides in the cytoplasm. The catalysed reaction is apo-[ACP] + CoA = holo-[ACP] + adenosine 3',5'-bisphosphate + H(+). In terms of biological role, transfers the 4'-phosphopantetheine moiety from coenzyme A to a Ser of acyl-carrier-protein. In Koribacter versatilis (strain Ellin345), this protein is Holo-[acyl-carrier-protein] synthase.